A 270-amino-acid polypeptide reads, in one-letter code: Small ribosomal subunit protein uS2 (270 aa).

It belongs to the universal ribosomal protein uS2 family. As to quaternary structure, component of the small ribosomal subunit. Mature ribosomes consist of a small (40S) and a large (60S) subunit. The 40S subunit contains about 33 different proteins and 1 molecule of RNA (18S). The 60S subunit contains about 49 different proteins and 3 molecules of RNA (28S, 5.8S and 5S). Interacts with oho23B/rpS21.

Its subcellular location is the cytoplasm. It is found in the nucleus. Its function is as follows. Required for the assembly and/or stability of the 40S ribosomal subunit. Required for the processing of the 20S rRNA-precursor to mature 18S rRNA in a late step of the maturation of 40S ribosomal subunits. Required during oogenesis and imaginal development. This is Small ribosomal subunit protein uS2 from Drosophila persimilis (Fruit fly).